The sequence spans 190 residues: MASKVDSSHEFPSQIKRCLSSSKYIQLATCFHDQPHSSLMTFTYLPAGSAAPYEVEDCIILSTGENSKKYFNISSNPRVSLLVHDWTTNRQETDPDASSLYTLLYKMNQAQFSNTSVTLNGLATVLPKNSKEEEFFREKHLNTNDKGNTKQYVEGEDMRIIKIKLESARICDQRLNNVQKWNARGDETPF.

2 residues coordinate FMN: serine 62 and lysine 69.

Belongs to the pyridoxamine 5'-phosphate oxidase family. It depends on FMN as a cofactor.

The protein localises to the cytoplasm. It localises to the nucleus. The protein is Pyridoxamine 5'-phosphate oxidase C1952.08c homolog of Schizosaccharomyces pombe (strain 972 / ATCC 24843) (Fission yeast).